The sequence spans 208 residues: Imidazoleglycerol-phosphate dehydratase (208 aa).

The protein belongs to the imidazoleglycerol-phosphate dehydratase family.

It is found in the cytoplasm. The enzyme catalyses D-erythro-1-(imidazol-4-yl)glycerol 3-phosphate = 3-(imidazol-4-yl)-2-oxopropyl phosphate + H2O. The protein operates within amino-acid biosynthesis; L-histidine biosynthesis; L-histidine from 5-phospho-alpha-D-ribose 1-diphosphate: step 6/9. The protein is Imidazoleglycerol-phosphate dehydratase of Paenarthrobacter aurescens (strain TC1).